Here is a 201-residue protein sequence, read N- to C-terminus: Glutathione peroxidase 1 (201 aa).

Residue S32 is modified to Phosphoserine. Residue U47 is part of the active site. Position 47 (U47) is a non-standard amino acid, selenocysteine. N6-acetyllysine; alternate occurs at positions 86, 112, and 146. Residues K86, K112, and K146 each carry the N6-succinyllysine; alternate modification. S195 and S199 each carry phosphoserine.

It belongs to the glutathione peroxidase family. In terms of assembly, homotetramer. Interacts with MIEN1. Post-translationally, during periods of oxidative stress, Sec-47 may react with a superoxide radical, irreversibly lose hydroselenide and be converted to dehydroalanine.

The protein resides in the cytoplasm. The catalysed reaction is 2 glutathione + H2O2 = glutathione disulfide + 2 H2O. It carries out the reaction (12S)-hydroperoxy-(5Z,8Z,10E,14Z)-eicosatetraenoate + 2 glutathione = (12S)-hydroxy-(5Z,8Z,10E,14Z)-eicosatetraenoate + glutathione disulfide + H2O. Its function is as follows. Protects the hemoglobin in erythrocytes from oxidative breakdown. In platelets, plays a crucial role of glutathione peroxidase in the arachidonic acid metabolism. The protein is Glutathione peroxidase 1 (GPX1) of Hylobates lar (Lar gibbon).